An 833-amino-acid polypeptide reads, in one-letter code: Scavenger receptor class F member 2 (833 aa).

The first 33 residues, 1–33 (MEGAGSRGAGPARRQGARGLGLLLLLWLLPGLA), serve as a signal peptide directing secretion. Topologically, residues 34-433 (APQDLNPRGR…ACHLETNQRK (400 aa)) are extracellular. EGF-like domains follow at residues 63–102 (LGDE…ANCD), 114–145 (CKER…ARCE), 140–174 (WGAR…AQCA), 175–204 (SACY…RSCN), 205–233 (NQCA…ARCD), and 228–262 (FGAR…KYCR). 18 cysteine pairs are disulfide-bonded: Cys67/Cys78, Cys72/Cys90, Cys92/Cys101, Cys118/Cys126, Cys120/Cys133, Cys135/Cys144, Cys148/Cys155, Cys150/Cys162, Cys164/Cys173, Cys177/Cys185, Cys179/Cys192, Cys194/Cys203, Cys207/Cys214, Cys209/Cys221, Cys223/Cys232, Cys236/Cys243, Cys238/Cys250, and Cys252/Cys261. N-linked (GlcNAc...) asparagine glycosylation is present at Asn75. Asn302 and Asn357 each carry an N-linked (GlcNAc...) asparagine glycan. The region spanning 364–395 (CAFVCSDCGSGHCDFQSGRCLCSPGVHGPHCN) is the EGF-like 7 domain. Cystine bridges form between Cys368–Cys376, Cys371–Cys383, and Cys385–Cys394. Residue Asn395 is glycosylated (N-linked (GlcNAc...) asparagine). A helical transmembrane segment spans residues 434 to 454 (GVMGAGALLTLLLGLLLSLLG). The Cytoplasmic portion of the chain corresponds to 455–833 (CCCACRGKDS…SRAGTAPGAS (379 aa)). A phosphoserine mark is found at Ser538 and Ser600. Positions 578 to 833 (SLEPTGTSTP…SRAGTAPGAS (256 aa)) are disordered. Position 615 is a phosphotyrosine (Tyr615). Residues 619–630 (ARREARPARTRN) are compositionally biased toward basic and acidic residues. A phosphoserine mark is found at Ser638, Ser640, and Ser695. Thr712 bears the Phosphothreonine mark. Basic and acidic residues predominate over residues 748–761 (ELRDKTRSLGRAEK). Over residues 781–798 (ASASEASGSEKAAASAPA) the composition is skewed to low complexity. A compositionally biased stretch (basic residues) spans 804 to 816 (KKTPIQKPPRKKS).

In terms of assembly, homophilic and heterophilic interaction via its extracellular domain. Interacts with SCARF1. The heterophilic interaction with SCARF1, which is stronger than the homophilic interaction with itself, is suppressed by the presence of SCARF1 ligand such as Ac-LDL.

The protein localises to the membrane. Its function is as follows. Probable adhesion protein, which mediates homophilic and heterophilic interactions. In contrast to SCARF1, it poorly mediates the binding and degradation of acetylated low density lipoprotein (Ac-LDL). The polypeptide is Scavenger receptor class F member 2 (Scarf2) (Mus musculus (Mouse)).